Reading from the N-terminus, the 312-residue chain is Apolipoprotein E (312 aa).

The signal sequence occupies residues M1–A18. 8 repeat units span residues V72–G93, P94–G115, A116–G137, Q138–M159, R160–E181, R182–A203, N204–R225, and G226–E247. The 8 X 22 AA approximate tandem repeats stretch occupies residues V72 to E247. M135 carries the post-translational modification Methionine sulfoxide. S139 carries the phosphoserine modification. The tract at residues H150–R160 is LDL and other lipoprotein receptors binding. Positions H150–R160 are LDL receptor binding. M154–R157 serves as a coordination point for heparin. The tract at residues T202–M282 is lipid-binding and lipoprotein association. A heparin-binding site is contributed by S221–L228. The homooligomerization stretch occupies residues Q258–Q312. Positions R270–M282 are specificity for association with VLDL.

Belongs to the apolipoprotein A1/A4/E family. Homotetramer. May interact with ABCA1; functionally associated with ABCA1 in the biogenesis of HDLs. May interact with APP/A4 amyloid-beta peptide; the interaction is extremely stable in vitro but its physiological significance is unclear. May interact with MAPT. May interact with MAP2. In the cerebrospinal fluid, interacts with secreted SORL1. Interacts with PMEL; this allows the loading of PMEL luminal fragment on ILVs to induce fibril nucleation. APOE exists as multiple glycosylated and sialylated glycoforms within cells and in plasma. The extent of glycosylation and sialylation are tissue and context specific. In terms of processing, glycated in plasma VLDL. Post-translationally, phosphorylated by FAM20C in the extracellular medium.

It is found in the secreted. The protein localises to the extracellular space. It localises to the extracellular matrix. Its subcellular location is the extracellular vesicle. The protein resides in the endosome. It is found in the multivesicular body. In terms of biological role, APOE is an apolipoprotein, a protein associating with lipid particles, that mainly functions in lipoprotein-mediated lipid transport between organs via the plasma and interstitial fluids. APOE is a core component of plasma lipoproteins and is involved in their production, conversion and clearance. Apolipoproteins are amphipathic molecules that interact both with lipids of the lipoprotein particle core and the aqueous environment of the plasma. As such, APOE associates with chylomicrons, chylomicron remnants, very low density lipoproteins (VLDL) and intermediate density lipoproteins (IDL) but shows a preferential binding to high-density lipoproteins (HDL). It also binds a wide range of cellular receptors including the LDL receptor/LDLR and the very low-density lipoprotein receptor/VLDLR that mediate the cellular uptake of the APOE-containing lipoprotein particles. Finally, APOE also has a heparin-binding activity and binds heparan-sulfate proteoglycans on the surface of cells, a property that supports the capture and the receptor-mediated uptake of APOE-containing lipoproteins by cells. In Rattus norvegicus (Rat), this protein is Apolipoprotein E (Apoe).